A 558-amino-acid chain; its full sequence is Cyclomaltodextrinase (558 aa).

Positions 143, 168, and 170 each coordinate Ca(2+). His243 and Arg323 together coordinate substrate. Catalysis depends on Asp325, which acts as the Nucleophile. Catalysis depends on Glu354, which acts as the Proton donor. Substrate is bound by residues 420–421 (HD), Asp465, and Arg469.

It belongs to the glycosyl hydrolase 13 family. As to quaternary structure, monomer. Depending on the pH of the solution, exists as a monomer, a homodimer or as an assembly of six homodimers forming a dodecamer, which is catalytically the most efficient form of the enzyme. Ca(2+) serves as cofactor.

It catalyses the reaction cyclomaltodextrin + H2O = linear maltodextrin. It carries out the reaction Hydrolysis of pullulan to panose (6-alpha-D-glucosylmaltose).. Its activity is regulated as follows. Hydrolysis of beta-cyclodextrin is inhibited by Cu(2+), Zn(2+) and Ag(+), and activated by Ca(2+), EGTA and EDTA. Activity is increased over twofold in the presence of 5 mM EDTA. Competitively inhibited by acarbose and methyl 6-amino-6-deoxy-alpha-D-glucopyranoside by reducing the rate of the ring opening step of the reaction. Hydrolyzes alpha-, beta- and gamma-cyclodextrins and the resulting linear maltodextrins, with the highest activity with beta-cyclodextrin (cyclomaltoheptaose). Soluble starch is hydrolyzed slowly, but it is nevertheless preferred over pullulan as a substrate. Is able to hydrolyze amylose and amylopectin, with a very strong preference for amylose, with maltose and glucose as the main products. Maltose and glucose are the main hydrolysis products of cyclomaltodextrins, maltodextrins and starch, whereas panose is the main hydrolysis product of pullulan. Acarbose is partially hydrolyzed to glucose and pseudotrisaccharide. No activity with maltose as substrate. Has transglycosylating activity with high concentrations of maltotriose, maltotetraose and starch. The chain is Cyclomaltodextrinase from Bacillus sp.